A 160-amino-acid chain; its full sequence is Major strawberry allergen Fra a 1-E (160 aa).

Belongs to the BetVI family. Monomer. Interacts with AP. As to expression, highly expressed in roots. Expressed in open flowers. Expressed at low levels in leaves, flower buds and fruits.

Involved in the control of flavonoid biosynthesis in fruits, probably by binding directly to natural flavonoids. Binds the natural flavonoid quercetin-3-O-glucuronide with affinities in the low micromolar range. The protein is Major strawberry allergen Fra a 1-E of Fragaria ananassa (Strawberry).